The primary structure comprises 433 residues: Enolase (433 aa).

A (2R)-2-phosphoglycerate-binding site is contributed by glutamine 167. The active-site Proton donor is glutamate 209. Mg(2+) contacts are provided by aspartate 246, glutamate 291, and aspartate 318. Lysine 343, arginine 372, serine 373, and lysine 394 together coordinate (2R)-2-phosphoglycerate. Catalysis depends on lysine 343, which acts as the Proton acceptor.

It belongs to the enolase family. As to quaternary structure, component of the RNA degradosome, a multiprotein complex involved in RNA processing and mRNA degradation. The cofactor is Mg(2+).

It is found in the cytoplasm. Its subcellular location is the secreted. It localises to the cell surface. It catalyses the reaction (2R)-2-phosphoglycerate = phosphoenolpyruvate + H2O. It functions in the pathway carbohydrate degradation; glycolysis; pyruvate from D-glyceraldehyde 3-phosphate: step 4/5. In terms of biological role, catalyzes the reversible conversion of 2-phosphoglycerate (2-PG) into phosphoenolpyruvate (PEP). It is essential for the degradation of carbohydrates via glycolysis. The sequence is that of Enolase from Tolumonas auensis (strain DSM 9187 / NBRC 110442 / TA 4).